A 116-amino-acid polypeptide reads, in one-letter code: Large ribosomal subunit protein bL17 (116 aa).

The protein belongs to the bacterial ribosomal protein bL17 family. As to quaternary structure, part of the 50S ribosomal subunit. Contacts protein L32.

The protein is Large ribosomal subunit protein bL17 of Helicobacter pylori (strain P12).